The primary structure comprises 77 residues: Acyl carrier protein (77 aa).

In terms of domain architecture, Carrier spans 2-77 (SSIDKRIKEI…DAIDYITDHT (76 aa)). Ser37 carries the O-(pantetheine 4'-phosphoryl)serine modification.

It belongs to the acyl carrier protein (ACP) family. 4'-phosphopantetheine is transferred from CoA to a specific serine of apo-ACP by AcpS. This modification is essential for activity because fatty acids are bound in thioester linkage to the sulfhydryl of the prosthetic group.

The protein resides in the cytoplasm. It functions in the pathway lipid metabolism; fatty acid biosynthesis. Carrier of the growing fatty acid chain in fatty acid biosynthesis. The chain is Acyl carrier protein from Geotalea uraniireducens (strain Rf4) (Geobacter uraniireducens).